A 262-amino-acid chain; its full sequence is Ribosomal RNA small subunit methyltransferase A (262 aa).

Positions 16, 18, 43, 64, 89, and 109 each coordinate S-adenosyl-L-methionine.

The protein belongs to the class I-like SAM-binding methyltransferase superfamily. rRNA adenine N(6)-methyltransferase family. RsmA subfamily.

It localises to the cytoplasm. The catalysed reaction is adenosine(1518)/adenosine(1519) in 16S rRNA + 4 S-adenosyl-L-methionine = N(6)-dimethyladenosine(1518)/N(6)-dimethyladenosine(1519) in 16S rRNA + 4 S-adenosyl-L-homocysteine + 4 H(+). Functionally, specifically dimethylates two adjacent adenosines (A1518 and A1519) in the loop of a conserved hairpin near the 3'-end of 16S rRNA in the 30S particle. May play a critical role in biogenesis of 30S subunits. The chain is Ribosomal RNA small subunit methyltransferase A from Xanthomonas axonopodis pv. citri (strain 306).